Consider the following 212-residue polypeptide: Chloramphenicol acetyltransferase (212 aa).

Histidine 186 (proton acceptor) is an active-site residue.

This sequence belongs to the chloramphenicol acetyltransferase family. As to quaternary structure, homotrimer.

The catalysed reaction is chloramphenicol + acetyl-CoA = chloramphenicol 3-acetate + CoA. Functionally, this enzyme is an effector of chloramphenicol resistance in bacteria. In Clostridioides difficile (Peptoclostridium difficile), this protein is Chloramphenicol acetyltransferase (catD).